The sequence spans 563 residues: Alpha-humulene synthase (563 aa).

4 residues coordinate Mg(2+): D316, D320, D461, and E469. The short motif at 316-320 (DDIYD) is the DDXXD motif element.

Belongs to the terpene synthase family. Tpsa subfamily. Mg(2+) is required as a cofactor. Mn(2+) serves as cofactor. In terms of tissue distribution, expressed in trichomes, cones and young leaves.

It carries out the reaction (2E,6E)-farnesyl diphosphate = alpha-humulene + diphosphate. Its pathway is sesquiterpene biosynthesis. The protein operates within secondary metabolite biosynthesis; terpenoid biosynthesis. Its function is as follows. Sesquiterpene synthase that catalyzes the formation of alpha-humulene. Can use farnesyl diphosphate (FPP) as substrate, but not geranyl diphosphate (GPP) or geranylgeranyl diphosphate (GGPP). The chain is Alpha-humulene synthase from Humulus lupulus (European hop).